The primary structure comprises 97 residues: Nuclear protein 2 (97 aa).

Residues 76-97 (LLNGQRKRRQRQLHPKMRTRLT) form a disordered region. The segment covering 80 to 97 (QRKRRQRQLHPKMRTRLT) has biased composition (basic residues).

The protein belongs to the NUPR family.

It is found in the nucleus. Its function is as follows. Acts as a transcriptional repressor by inhibiting gene expression at the NUPR1 promoter in a p53/TP53-dependent manner in cancer cells. Involved in the G1 cell cycle arrest, and in a decrease in cell viability and cell proliferation. Plays a role as a negative regulator of the protumoral factor NUPR1. The chain is Nuclear protein 2 from Homo sapiens (Human).